The chain runs to 668 residues: BTB/POZ domain-containing protein At5g66560 (668 aa).

The BTB domain maps to 21-133; it reads SDIEIEVDDM…CYGVKMDLSA (113 aa). The segment covering 73 to 84 has biased composition (basic and acidic residues); it reads ETDKKGKGHEIE. The segment at 73-98 is disordered; that stretch reads ETDKKGKGHEIEDDKEEEEVEEQEIE. Residues 85–98 show a composition bias toward acidic residues; it reads DDKEEEEVEEQEIE. Positions 254-530 constitute an NPH3 domain; the sequence is ELWFEDLTQL…VQVLFFEQLQ (277 aa). The residue at position 471 (Tyr-471) is a Phosphotyrosine.

The protein belongs to the NPH3 family.

It functions in the pathway protein modification; protein ubiquitination. Its function is as follows. May act as a substrate-specific adapter of an E3 ubiquitin-protein ligase complex (CUL3-RBX1-BTB) which mediates the ubiquitination and subsequent proteasomal degradation of target proteins. This Arabidopsis thaliana (Mouse-ear cress) protein is BTB/POZ domain-containing protein At5g66560.